We begin with the raw amino-acid sequence, 183 residues long: uncharacterized protein (183 aa).

In terms of domain architecture, GGDEF spans 55 to 183; sequence PRAAVLLVDL…RSRRGSRPAR (129 aa).

Its function is as follows. Might be involved in pSAM2 replication control. This is an uncharacterized protein from Streptomyces ambofaciens.